The chain runs to 345 residues: NADPH dehydrogenase (345 aa).

An FMN-binding site is contributed by 23–26; that stretch reads SPMC. Substrate is bound at residue Y28. FMN is bound by residues A60 and Q102. Substrate is bound at residue 164–167; it reads HGAH. Residues R215 and 307 to 308 contribute to the FMN site; that span reads GR.

Belongs to the NADH:flavin oxidoreductase/NADH oxidase family. NamA subfamily. In terms of assembly, homotetramer. FMN serves as cofactor.

The enzyme catalyses A + NADPH + H(+) = AH2 + NADP(+). In terms of biological role, catalyzes the reduction of the double bond of an array of alpha,beta-unsaturated aldehydes and ketones. It also reduces the nitro group of nitroester and nitroaromatic compounds. It could have a role in detoxification processes. This Bacillus cereus (strain ATCC 14579 / DSM 31 / CCUG 7414 / JCM 2152 / NBRC 15305 / NCIMB 9373 / NCTC 2599 / NRRL B-3711) protein is NADPH dehydrogenase.